Reading from the N-terminus, the 122-residue chain is Large ribosomal subunit protein uL14 (122 aa).

This sequence belongs to the universal ribosomal protein uL14 family. As to quaternary structure, part of the 50S ribosomal subunit. Forms a cluster with proteins L3 and L19. In the 70S ribosome, L14 and L19 interact and together make contacts with the 16S rRNA in bridges B5 and B8.

Its function is as follows. Binds to 23S rRNA. Forms part of two intersubunit bridges in the 70S ribosome. The chain is Large ribosomal subunit protein uL14 from Salinibacter ruber (strain DSM 13855 / M31).